We begin with the raw amino-acid sequence, 681 residues long: Terpene synthase 6, chloroplastic (681 aa).

Aspartate 433, aspartate 437, asparagine 577, and glutamate 585 together coordinate Mg(2+). The short motif at 433-437 is the DDXXD motif element; it reads DDLFD.

This sequence belongs to the terpene synthase family. It depends on Mg(2+) as a cofactor. Expressed in leaves.

It localises to the plastid. Its subcellular location is the chloroplast. It functions in the pathway secondary metabolite biosynthesis; terpenoid biosynthesis. In terms of biological role, may be involved in the biosynthesis of ent-kaurene diterpenoids natural products such as oridonin, miltiradiene, eriocalyxin B and nezukol, known to exhibit antitumor, anti-inflammatory and antibacterial activities. The sequence is that of Terpene synthase 6, chloroplastic from Isodon rubescens (Rabdosia rubescens).